The sequence spans 315 residues: DNA-directed RNA polymerase subunit alpha (315 aa).

Residues 1–228 are alpha N-terminal domain (alpha-NTD); sequence MLEIEKPIIE…EHFKLFMSLT (228 aa). The tract at residues 245 to 315 is alpha C-terminal domain (alpha-CTD); it reads KEKVLEMTVE…LGLALKLTEE (71 aa).

Belongs to the RNA polymerase alpha chain family. Homodimer. The RNAP catalytic core consists of 2 alpha, 1 beta, 1 beta' and 1 omega subunit. When a sigma factor is associated with the core the holoenzyme is formed, which can initiate transcription.

The catalysed reaction is RNA(n) + a ribonucleoside 5'-triphosphate = RNA(n+1) + diphosphate. In terms of biological role, DNA-dependent RNA polymerase catalyzes the transcription of DNA into RNA using the four ribonucleoside triphosphates as substrates. The chain is DNA-directed RNA polymerase subunit alpha from Clostridium beijerinckii (strain ATCC 51743 / NCIMB 8052) (Clostridium acetobutylicum).